The following is a 125-amino-acid chain: Small ribosomal subunit protein eS8 (125 aa).

Belongs to the eukaryotic ribosomal protein eS8 family. As to quaternary structure, part of the 30S ribosomal subunit.

The protein is Small ribosomal subunit protein eS8 of Methanocella arvoryzae (strain DSM 22066 / NBRC 105507 / MRE50).